Reading from the N-terminus, the 172-residue chain is Disulfide bond formation protein B (172 aa).

At 1–11 the chain is on the cytoplasmic side; the sequence is MNPFRWSFRAQ. Residues 12–28 traverse the membrane as a helical segment; the sequence is FLLGFLACAGLLAYAIY. Residues 29–46 are Periplasmic-facing; sequence VQLHLGLEPCPLCIFQRI. Cysteines 38 and 41 form a disulfide. Residues 47-63 form a helical membrane-spanning segment; that stretch reads AFAALAVFFLIGALHGP. Topologically, residues 64–70 are cytoplasmic; that stretch reads RAAGARK. Residues 71-88 traverse the membrane as a helical segment; sequence VYGVLSFIAAGVGMGIGA. Residues 89–145 are Periplasmic-facing; that stretch reads RHVWVQIRPKDMMSSCGPPLSFLSETMGPFEVFRTVLTGTGDCGNIDWRFLGLSMPM. An intrachain disulfide couples Cys104 to Cys131. The helical transmembrane segment at 146-164 threads the bilayer; it reads WSMVWFVGLALWALSAGFK. The Cytoplasmic segment spans residues 165-172; the sequence is ARRSSLHH.

Belongs to the DsbB family.

It is found in the cell inner membrane. In terms of biological role, required for disulfide bond formation in some periplasmic proteins. Acts by oxidizing the DsbA protein. This chain is Disulfide bond formation protein B, found in Xanthomonas oryzae pv. oryzae (strain MAFF 311018).